The following is a 279-amino-acid chain: Very long chain fatty acid elongase 1 (279 aa).

Residue Met1 is modified to N-acetylmethionine. 7 helical membrane passes run Pro23 to Leu43, Phe61 to Leu81, Val110 to Leu130, Val137 to Trp154, Val176 to Trp196, Met201 to Phe221, and Val231 to Trp251. The Di-lysine motif signature appears at Lys275–Asn279.

It belongs to the ELO family. ELOVL1 subfamily. In terms of assembly, interacts with LASS2 and HSD17B12. Interacts with TECR. In terms of tissue distribution, ubiquitous.

The protein localises to the endoplasmic reticulum membrane. It catalyses the reaction a very-long-chain acyl-CoA + malonyl-CoA + H(+) = a very-long-chain 3-oxoacyl-CoA + CO2 + CoA. It carries out the reaction eicosanoyl-CoA + malonyl-CoA + H(+) = 3-oxodocosanoyl-CoA + CO2 + CoA. The enzyme catalyses (11Z)-eicosenoyl-CoA + malonyl-CoA + H(+) = 3-oxo-(13Z)-docosenoyl-CoA + CO2 + CoA. The catalysed reaction is docosanoyl-CoA + malonyl-CoA + H(+) = 3-oxotetracosanoyl-CoA + CO2 + CoA. It catalyses the reaction (13Z)-docosenoyl-CoA + malonyl-CoA + H(+) = 3-oxo-(15Z)-tetracosenoyl-CoA + CO2 + CoA. It carries out the reaction tetracosanoyl-CoA + malonyl-CoA + H(+) = 3-oxohexacosanoyl-CoA + CO2 + CoA. The enzyme catalyses hexacosanoyl-CoA + malonyl-CoA + H(+) = 3-oxooctacosanyol-CoA + CO2 + CoA. The catalysed reaction is octadecanoyl-CoA + malonyl-CoA + H(+) = 3-oxoeicosanoyl-CoA + CO2 + CoA. It participates in lipid metabolism; fatty acid biosynthesis. Functionally, catalyzes the first and rate-limiting reaction of the four reactions that constitute the long-chain fatty acids elongation cycle. This endoplasmic reticulum-bound enzymatic process allows the addition of 2 carbons to the chain of long- and very long-chain fatty acids (VLCFAs) per cycle. Condensing enzyme that exhibits activity toward saturated and monounsaturated acyl-CoA substrates, with the highest activity towards C22:0 acyl-CoA. May participate in the production of both saturated and monounsaturated VLCFAs of different chain lengths that are involved in multiple biological processes as precursors of membrane lipids and lipid mediators. Important for saturated C24:0 and monounsaturated C24:1 sphingolipid synthesis. Indirectly inhibits RPE65 via production of VLCFAs. The sequence is that of Very long chain fatty acid elongase 1 from Homo sapiens (Human).